We begin with the raw amino-acid sequence, 526 residues long: MKYNEQEVDRRRTFAIVSHPDAGKTTITEKLLLFGGAIQQAGEVRARKAARHATSDWMEMEKQRGISVTSSVMKFTYRDYEVNLLDTPGHNDFSEDTYRVLTAVDSALMVIDSVKGVESQTIKLLDVCRLRHTPIMTFINKLDREGRDPFELIDEIEKVLRIQCAPMTWPIGMGKRFRGTYHLYTKELVIFDAEAERGTGGVISMTGLDDPQLDELLGSQADELRADVELLEGAAHPFEEEAYHAGLQTPVFFGSAINTFGVQQLLDTFVDHAPAPLPREAVSRTVSPYEEPFTAFAFKIQANMDPAHRDRIAFFRICSGKFTRGMKVRHVRLGREVAINNATIFMAQDRTHVDEAFPGDIIGIHNHGTIKIGDTFTLGEDIKFTGIPNFAPEHFRRVRLLDPLKSKALEKGLTQLAEEGTTQVFRPLMGADWVVGAVGLLQFDVVMHRLEHEYNVKATYEPVSYVTARWVTGEKKKVEEFQKKEVMNCYIDGEGDLAYLAGSQWRLDNTMDNWKDLTFHATREHS.

Residues 9 to 277 (DRRRTFAIVS…TFVDHAPAPL (269 aa)) form the tr-type G domain. GTP is bound by residues 18–25 (SHPDAGKT), 86–90 (DTPGH), and 140–143 (NKLD).

This sequence belongs to the TRAFAC class translation factor GTPase superfamily. Classic translation factor GTPase family. PrfC subfamily.

The protein resides in the cytoplasm. Functionally, increases the formation of ribosomal termination complexes and stimulates activities of RF-1 and RF-2. It binds guanine nucleotides and has strong preference for UGA stop codons. It may interact directly with the ribosome. The stimulation of RF-1 and RF-2 is significantly reduced by GTP and GDP, but not by GMP. The chain is Peptide chain release factor 3 from Geobacter sulfurreducens (strain ATCC 51573 / DSM 12127 / PCA).